The chain runs to 762 residues: cGMP-dependent protein kinase 2 (762 aa).

A disordered region spans residues 1-25; the sequence is MGNGSVKPKHSKHPDGHSGNLTTDA. Residue Gly-2 is the site of N-myristoyl glycine attachment. Positions 23–85 form a coiled coil; the sequence is TDALRNKVTE…CIQLNKLQDV (63 aa). Phosphoserine is present on residues Ser-110 and Ser-117. The disordered stretch occupies residues 117-138; it reads SRRGAKAGVSAEPTTRTYDLNK. The segment at 168 to 283 is cGMP-binding, high affinity; cAMP-binding, moderate affinity; it reads FLKRLDPQQI…DEQYRNFLRS (116 aa). 3',5'-cyclic AMP contacts are provided by residues 232-235 and 242-243; these read GELA and RT. Residues 232–235, 242–243, Lys-347, 356–359, 366–367, Asp-412, and Arg-415 contribute to the 3',5'-cyclic GMP site; these read GELA, RT, GEKA, and RS. The tract at residues 286 to 416 is cGMP-binding, high affinity; cAMP-binding, low affinity; the sequence is LLKNLPEDKL…NLNRDDEKRH (131 aa). Phosphoserine is present on Ser-431. The Protein kinase domain occupies 453 to 711; the sequence is LEIIATLGVG…INDIKKHRWL (259 aa). Residues 459–467 and Lys-482 contribute to the ATP site; that span reads LGVGGFGRV. Asp-576 serves as the catalytic Proton acceptor. A Phosphothreonine modification is found at Thr-609. The 51-residue stretch at 712 to 762 folds into the AGC-kinase C-terminal domain; the sequence is NGFNWEGLKARSLPSPLQRELKGPIDHSYFDKYPPEKGMPPDELSGWDKDF. The disordered stretch occupies residues 740 to 762; the sequence is YFDKYPPEKGMPPDELSGWDKDF.

This sequence belongs to the protein kinase superfamily. AGC Ser/Thr protein kinase family. cGMP subfamily. In terms of assembly, interacts with GRIA1/GLUR1. Post-translationally, myristoylation mediates membrane localization. In terms of tissue distribution, highly concentrated in brain, lung and intestinal mucosa.

It localises to the apical cell membrane. It carries out the reaction L-seryl-[protein] + ATP = O-phospho-L-seryl-[protein] + ADP + H(+). The enzyme catalyses L-threonyl-[protein] + ATP = O-phospho-L-threonyl-[protein] + ADP + H(+). With respect to regulation, binding of cGMP results in enzyme activation. Functionally, crucial regulator of intestinal secretion and bone growth. Phosphorylates and activates CFTR on the plasma membrane. Plays a key role in intestinal secretion by regulating cGMP-dependent translocation of CFTR in jejunum. Acts downstream of NMDAR to activate the plasma membrane accumulation of GRIA1/GLUR1 in synapse and increase synaptic plasticity. Phosphorylates GRIA1/GLUR1 at Ser-863. Acts as a regulator of gene expression and activator of the extracellular signal-regulated kinases MAPK3/ERK1 and MAPK1/ERK2 in mechanically stimulated osteoblasts. Under fluid shear stress, mediates ERK activation and subsequent induction of FOS, FOSL1/FRA1, FOSL2/FRA2 and FOSB that play a key role in the osteoblast anabolic response to mechanical stimulation. This Homo sapiens (Human) protein is cGMP-dependent protein kinase 2 (PRKG2).